A 138-amino-acid chain; its full sequence is Translation initiation factor 2 subunit beta (138 aa).

Belongs to the eIF-2-beta/eIF-5 family. In terms of assembly, heterotrimer composed of an alpha, a beta and a gamma chain.

In terms of biological role, eIF-2 functions in the early steps of protein synthesis by forming a ternary complex with GTP and initiator tRNA. The polypeptide is Translation initiation factor 2 subunit beta (Methanococcus maripaludis (strain DSM 14266 / JCM 13030 / NBRC 101832 / S2 / LL)).